A 535-amino-acid chain; its full sequence is Dynein axonemal assembly factor 8 (535 aa).

Disordered regions lie at residues 112–215 (AELA…QERR), 228–267 (RDAC…EGPP), 344–380 (PADT…QGMR), 395–444 (TVPP…LRSC), and 461–535 (IAQP…LDQL). Residues 125–139 (RTKDASSQEGRDPGR) are compositionally biased toward basic and acidic residues. Positions 166–175 (GSLSFNTKGS) are enriched in polar residues. Ser-175 is modified (phosphoserine). Residue Ser-362 is modified to Phosphoserine. The segment covering 415–424 (DSEEEEEEVE) has biased composition (acidic residues). The segment covering 435 to 444 (SPSSLGLRSC) has biased composition (polar residues).

The protein resides in the dynein axonemal particle. Its subcellular location is the cytoplasm. In cyliated cells, dynein axonemal particle-specific protein required for deployment of ODA to the axoneme. Interacts with outer dynein arm (ODA) subunits. In Macaca fascicularis (Crab-eating macaque), this protein is Dynein axonemal assembly factor 8 (DNAAF8).